The primary structure comprises 745 residues: Arf-GAP with coiled-coil, ANK repeat and PH domain-containing protein 1 (745 aa).

A BAR domain is found at 1 to 226 (MTVKLDFEEC…RKELGGQLHQ (226 aa)). A required for formation of endosomal tubules when overexpressed with PIP5K1C region spans residues 1–382 (MTVKLDFEEC…RGLGQGSGHL (382 aa)). One can recognise a PH domain in the interval 265–360 (GLVMEGHLFK…WVSAVQSSIA (96 aa)). One can recognise an Arf-GAP domain in the interval 405-527 (GHVAAQVQSV…KFLTKLPEIR (123 aa)). Positions 405–745 (GHVAAQVQSV…SRRSHDLHTL (341 aa)) are required for interaction with GULP1. The C4-type zinc-finger motif lies at 420–443 (CCDCREPAPEWASINLGVTLCIQC). Y485 is subject to 3'-nitrotyrosine. The segment at 525–567 (EIRGRRGGRGPPRGHPPVPPKPGLIRPKPGSFRSKPEPPSEDL) is prevents interaction with ITGB1 when S-554 is not phosphorylated. A disordered region spans residues 525 to 569 (EIRGRRGGRGPPRGHPPVPPKPGLIRPKPGSFRSKPEPPSEDLQS). Positions 537–546 (RGHPPVPPKP) are enriched in pro residues. The residue at position 555 (S555) is a Phosphoserine; by PKB. 3 ANK repeats span residues 607-640 (ENAT…NVNQ), 644-673 (QGRG…DLGV), and 677-707 (EGRD…EADA).

As to quaternary structure, banana-shaped homodimer laterally assembling into tetramers, the tetramers further pack helically onto the membrane. Interacts with GTP-bound ARF6. Interacts with third cytoplasmic loop of SLC2A4/GLUT4. Interacts with CLTC. Interacts with GULP1. Forms a complex with GDP-bound ARF6 and GULP1. Interacts with ITGB1; required for ITGB1 recycling. Post-translationally, phosphorylation at Ser-555 by PKB is required for interaction with ITGB1, export of ITGB1 from recycling endosomes to the cell surface and ITGB1-dependent cell migration.

It localises to the recycling endosome membrane. Its activity is regulated as follows. GAP activity stimulated by phosphatidylinositol 4,5-bisphosphate (PIP2) and phosphatidic acid. In terms of biological role, GTPase-activating protein (GAP) for ADP ribosylation factor 6 (ARF6) required for clathrin-dependent export of proteins from recycling endosomes to trans-Golgi network and cell surface. Required for regulated export of ITGB1 from recycling endosomes to the cell surface and ITGB1-dependent cell migration. This chain is Arf-GAP with coiled-coil, ANK repeat and PH domain-containing protein 1 (ACAP1), found in Bos taurus (Bovine).